A 1073-amino-acid chain; its full sequence is Transmembrane protein 132E (1073 aa).

The signal sequence occupies residues 1-33 (MGHFVVQGDLPWILCSLRLVIMIIAGKVSPTSS). The Extracellular segment spans residues 34 to 899 (DALFSVPVPS…MTDLEIGMYA (866 aa)). N-linked (GlcNAc...) asparagine glycosylation is present at Asn102. The tract at residues 246–270 (DPDSNDECGESYPRRGGPSRGESLS) is disordered. N-linked (GlcNAc...) asparagine glycosylation is found at Asn324, Asn396, and Asn746. Residues 900-920 (LLGVFCLAILVFLINCIVFVL) form a helical membrane-spanning segment. Topologically, residues 921-1073 (KYRHKRIPPE…DYMRRIKEIA (153 aa)) are cytoplasmic. Polar residues predominate over residues 952 to 970 (TQSDLSPQTVESPSNTLEG). The disordered stretch occupies residues 952–1024 (TQSDLSPQTV…PTSKRKRVKF (73 aa)). A compositionally biased stretch (low complexity) spans 982–994 (SGSSQTSVQSQVH).

This sequence belongs to the TMEM132 family.

The protein localises to the membrane. Functionally, required for normal inner ear hair cell function and hearing. The polypeptide is Transmembrane protein 132E (tmem132e) (Danio rerio (Zebrafish)).